We begin with the raw amino-acid sequence, 303 residues long: Mesenteric estrogen-dependent adipogenesis protein (303 aa).

Highly expressed in the visceral fat depot.

It is found in the cytoplasm. Involved in processes that promote adipocyte differentiation, lipid accumulation, and glucose uptake in mature adipocytes. The sequence is that of Mesenteric estrogen-dependent adipogenesis protein (MEDAG) from Homo sapiens (Human).